Consider the following 373-residue polypeptide: tRNA-specific 2-thiouridylase MnmA (373 aa).

ATP contacts are provided by residues 12 to 19 and Met-38; that span reads GMSGGVDS. The interaction with target base in tRNA stretch occupies residues 98-100; it reads NPD. Catalysis depends on Cys-103, which acts as the Nucleophile. An intrachain disulfide couples Cys-103 to Cys-200. Gly-127 serves as a coordination point for ATP. Residues 150–152 form an interaction with tRNA region; that stretch reads KDQ. Residue Cys-200 is the Cysteine persulfide intermediate of the active site. Positions 312–313 are interaction with tRNA; that stretch reads RY.

The protein belongs to the MnmA/TRMU family.

It localises to the cytoplasm. The enzyme catalyses S-sulfanyl-L-cysteinyl-[protein] + uridine(34) in tRNA + AH2 + ATP = 2-thiouridine(34) in tRNA + L-cysteinyl-[protein] + A + AMP + diphosphate + H(+). Catalyzes the 2-thiolation of uridine at the wobble position (U34) of tRNA, leading to the formation of s(2)U34. The protein is tRNA-specific 2-thiouridylase MnmA of Streptococcus agalactiae serotype III (strain NEM316).